The sequence spans 355 residues: Putative beta-lactamase HcpE (355 aa).

The signal sequence occupies residues 1 to 22 (MGVKFLKILVCGLFFWSLNAHL). TPR repeat units follow at residues 27-60 (DNSF…GVSE), 63-96 (TQLG…DDRE), 98-131 (CFGL…LKHP), 132-166 (ESCY…DMAK), 202-240 (GQAC…NNSG), 245-275 (LGSM…MGSA), 276-311 (VSCS…MGDE), and 312-344 (VGCF…GMKQ). Cystine bridges form between C54/C62, C90/C98, C126/C134, C160/C168, C197/C205, C234/C242, C270/C278, C306/C314, and C338/C346.

It belongs to the hcp beta-lactamase family.

It localises to the secreted. The enzyme catalyses a beta-lactam + H2O = a substituted beta-amino acid. In terms of biological role, may hydrolyze 6-aminopenicillinic acid and 7-aminocephalosporanic acid (ACA) derivatives. This Helicobacter pylori (strain ATCC 700392 / 26695) (Campylobacter pylori) protein is Putative beta-lactamase HcpE (hcpE).